The sequence spans 152 residues: Putative RING finger protein 157L (152 aa).

Residues 111 to 146 (CVVCYENEICIKIQPCNHFVVCKSCFNRLNTCPMCR) form an RING-type zinc finger.

It belongs to the IIV-6 157L family.

The sequence is that of Putative RING finger protein 157L from Invertebrate iridescent virus 6 (IIV-6).